Consider the following 89-residue polypeptide: Large ribosomal subunit protein bL27 (89 aa).

The segment at 1-20 (MAHKKAGGSSRNGRDSIGRR) is disordered.

This sequence belongs to the bacterial ribosomal protein bL27 family.

This is Large ribosomal subunit protein bL27 from Ruegeria pomeroyi (strain ATCC 700808 / DSM 15171 / DSS-3) (Silicibacter pomeroyi).